A 127-amino-acid chain; its full sequence is Small ribosomal subunit protein uS8m (127 aa).

The protein belongs to the universal ribosomal protein uS8 family.

The protein localises to the mitochondrion. This Acanthamoeba castellanii (Amoeba) protein is Small ribosomal subunit protein uS8m (RPS8).